A 507-amino-acid polypeptide reads, in one-letter code: Fumarate hydratase, mitochondrial (507 aa).

The N-terminal 41 residues, 1–41, are a transit peptide targeting the mitochondrion; that stretch reads MYRALRLLARSRRLLRVPSAGAAVSGEATTLPRCAPNVARM. N6-acetyllysine; alternate occurs at positions 58, 63, and 77. Residues K58, K63, and K77 each carry the N6-succinyllysine; alternate modification. A Phosphothreonine modification is found at T82. N6-acetyllysine; alternate occurs at positions 112 and 119. K112 and K119 each carry N6-succinyllysine; alternate. Substrate contacts are provided by residues 142-144, 173-176, and 183-185; these read SGT, HPND, and SSN. K210 is modified (N6-acetyllysine). K220 carries the N6-acetyllysine; alternate modification. N6-succinyllysine; alternate is present on K220. Substrate is bound at residue T231. H232 functions as the Proton donor/acceptor in the catalytic mechanism. Position 233 is a phosphothreonine (T233). An N6-acetyllysine; alternate modification is found at K289. K289 carries the post-translational modification N6-succinyllysine; alternate. S362 is an active-site residue. Substrate-binding positions include S363 and 368–370; that span reads KVN. Phosphoserine is present on S363. N6-succinyllysine is present on residues K464 and K470. An N6-acetyllysine modification is found at K499.

It belongs to the class-II fumarase/aspartase family. Fumarase subfamily. Homotetramer. Interacts with H2AZ1. Phosphorylation at Thr-233 by PRKDC in response to DNA damage promotes translocation to the nucleus and recruitment to DNA double-strand breaks (DSBs).

It localises to the mitochondrion. Its subcellular location is the cytoplasm. The protein localises to the cytosol. The protein resides in the nucleus. It is found in the chromosome. The enzyme catalyses (S)-malate = fumarate + H2O. Its pathway is carbohydrate metabolism; tricarboxylic acid cycle; (S)-malate from fumarate: step 1/1. In terms of biological role, catalyzes the reversible stereospecific interconversion of fumarate to L-malate. Experiments in different species have demonstrated that specific isoforms of this protein act in defined pathways and favor one direction over the other. Functionally, catalyzes the hydration of fumarate to L-malate in the tricarboxylic acid (TCA) cycle to facilitate a transition step in the production of energy in the form of NADH. Catalyzes the dehydration of L-malate to fumarate. Fumarate metabolism in the cytosol plays a role during urea cycle and arginine metabolism; fumarate being a by-product of the urea cycle and amino-acid catabolism. Also plays a role in DNA repair by promoting non-homologous end-joining (NHEJ). In response to DNA damage and phosphorylation by PRKDC, translocates to the nucleus and accumulates at DNA double-strand breaks (DSBs): acts by catalyzing formation of fumarate, an inhibitor of KDM2B histone demethylase activity, resulting in enhanced dimethylation of histone H3 'Lys-36' (H3K36me2). The sequence is that of Fumarate hydratase, mitochondrial from Mus musculus (Mouse).